The chain runs to 82 residues: Putative membrane protein insertion efficiency factor (82 aa).

Belongs to the UPF0161 family.

It localises to the cell membrane. In terms of biological role, could be involved in insertion of integral membrane proteins into the membrane. The protein is Putative membrane protein insertion efficiency factor of Streptococcus uberis (strain ATCC BAA-854 / 0140J).